The following is a 174-amino-acid chain: Probable phenolic acid decarboxylase (174 aa).

This sequence belongs to the PadC family.

Functionally, catalyzes the decarboxylation of phenolic acids. In Vibrio cholerae serotype O1 (strain ATCC 39315 / El Tor Inaba N16961), this protein is Probable phenolic acid decarboxylase (padC).